A 62-amino-acid chain; its full sequence is Large ribosomal subunit protein eL24 (62 aa).

4 residues coordinate Zn(2+): Cys-6, Cys-9, Cys-32, and Cys-36. A C4-type zinc finger spans residues 6–36; sequence CYFCGQMLEPGTGKLYIKKDGSTYFMCSSKC.

The protein belongs to the eukaryotic ribosomal protein eL24 family. Part of the 50S ribosomal subunit. Forms a cluster with proteins L3 and L14. Zn(2+) serves as cofactor.

In terms of biological role, binds to the 23S rRNA. The protein is Large ribosomal subunit protein eL24 of Methanosarcina mazei (strain ATCC BAA-159 / DSM 3647 / Goe1 / Go1 / JCM 11833 / OCM 88) (Methanosarcina frisia).